Here is a 185-residue protein sequence, read N- to C-terminus: Protein GrpE (185 aa).

Residues 1–37 form a disordered region; that stretch reads MEEQEEKQYNQNIQDNEEGTQMREELQESTSAQQTLQ. Over residues 28–37 the composition is skewed to polar residues; that stretch reads ESTSAQQTLQ.

It belongs to the GrpE family. As to quaternary structure, homodimer.

The protein resides in the cytoplasm. Functionally, participates actively in the response to hyperosmotic and heat shock by preventing the aggregation of stress-denatured proteins, in association with DnaK and GrpE. It is the nucleotide exchange factor for DnaK and may function as a thermosensor. Unfolded proteins bind initially to DnaJ; upon interaction with the DnaJ-bound protein, DnaK hydrolyzes its bound ATP, resulting in the formation of a stable complex. GrpE releases ADP from DnaK; ATP binding to DnaK triggers the release of the substrate protein, thus completing the reaction cycle. Several rounds of ATP-dependent interactions between DnaJ, DnaK and GrpE are required for fully efficient folding. In Helicobacter hepaticus (strain ATCC 51449 / 3B1), this protein is Protein GrpE.